Here is a 174-residue protein sequence, read N- to C-terminus: ATP synthase subunit delta, sodium ion specific (174 aa).

This sequence belongs to the ATPase delta chain family. F-type ATPases have 2 components, F(1) - the catalytic core - and F(0) - the membrane proton channel. F(1) has five subunits: alpha(3), beta(3), gamma(1), delta(1), epsilon(1). F(0) has three main subunits: a(1), b(2) and c(10-14). The alpha and beta chains form an alternating ring which encloses part of the gamma chain. F(1) is attached to F(0) by a central stalk formed by the gamma and epsilon chains, while a peripheral stalk is formed by the delta and b chains.

Its subcellular location is the cell inner membrane. In terms of biological role, f(1)F(0) ATP synthase produces ATP from ADP in the presence of a proton or sodium gradient. F-type ATPases consist of two structural domains, F(1) containing the extramembraneous catalytic core and F(0) containing the membrane proton channel, linked together by a central stalk and a peripheral stalk. During catalysis, ATP synthesis in the catalytic domain of F(1) is coupled via a rotary mechanism of the central stalk subunits to proton translocation. This protein is part of the stalk that links CF(0) to CF(1). It either transmits conformational changes from CF(0) to CF(1) or is implicated in proton conduction. The chain is ATP synthase subunit delta, sodium ion specific from Propionigenium modestum.